Consider the following 196-residue polypeptide: GTP cyclohydrolase 1 (196 aa).

Residues Cys-86, His-89, and Cys-158 each contribute to the Zn(2+) site.

Belongs to the GTP cyclohydrolase I family. Homomer.

The enzyme catalyses GTP + H2O = 7,8-dihydroneopterin 3'-triphosphate + formate + H(+). Its pathway is cofactor biosynthesis; 7,8-dihydroneopterin triphosphate biosynthesis; 7,8-dihydroneopterin triphosphate from GTP: step 1/1. This chain is GTP cyclohydrolase 1, found in Clostridium botulinum (strain Loch Maree / Type A3).